Here is a 156-residue protein sequence, read N- to C-terminus: Ribosomal RNA large subunit methyltransferase H (156 aa).

S-adenosyl-L-methionine contacts are provided by residues L73, G104, and 123 to 128 (LSALTL).

The protein belongs to the RNA methyltransferase RlmH family. In terms of assembly, homodimer.

Its subcellular location is the cytoplasm. It catalyses the reaction pseudouridine(1915) in 23S rRNA + S-adenosyl-L-methionine = N(3)-methylpseudouridine(1915) in 23S rRNA + S-adenosyl-L-homocysteine + H(+). Its function is as follows. Specifically methylates the pseudouridine at position 1915 (m3Psi1915) in 23S rRNA. The protein is Ribosomal RNA large subunit methyltransferase H of Shewanella sp. (strain ANA-3).